The primary structure comprises 550 residues: Aspartate--tRNA ligase (550 aa).

Position 162 (Glu-162) interacts with L-aspartate. The tract at residues 186 to 189 (QIYK) is aspartate. Arg-208 is a binding site for L-aspartate. ATP is bound by residues 208–210 (RDE) and Gln-217. Residue His-417 participates in L-aspartate binding. Glu-451 is a binding site for ATP. Arg-458 contributes to the L-aspartate binding site. Position 499-502 (499-502 (GIDR)) interacts with ATP.

This sequence belongs to the class-II aminoacyl-tRNA synthetase family. Type 1 subfamily. As to quaternary structure, homodimer.

The protein resides in the cytoplasm. The catalysed reaction is tRNA(Asp) + L-aspartate + ATP = L-aspartyl-tRNA(Asp) + AMP + diphosphate. Functionally, catalyzes the attachment of L-aspartate to tRNA(Asp) in a two-step reaction: L-aspartate is first activated by ATP to form Asp-AMP and then transferred to the acceptor end of tRNA(Asp). This Mycoplasma genitalium (strain ATCC 33530 / DSM 19775 / NCTC 10195 / G37) (Mycoplasmoides genitalium) protein is Aspartate--tRNA ligase.